A 298-amino-acid chain; its full sequence is Protoheme IX farnesyltransferase (298 aa).

A run of 9 helical transmembrane segments spans residues 26-46 (VVSL…PGAV), 52-72 (IFGT…NCLV), 93-113 (VSVP…LFML), 120-140 (LTMW…TVIL), 148-168 (IVIG…AVTG), 174-194 (ALLL…ALAL), 219-239 (LHVL…YLTQ), 241-261 (SGLI…YYAI), and 278-298 (YSIA…YFYF).

This sequence belongs to the UbiA prenyltransferase family. Protoheme IX farnesyltransferase subfamily.

Its subcellular location is the cell inner membrane. It carries out the reaction heme b + (2E,6E)-farnesyl diphosphate + H2O = Fe(II)-heme o + diphosphate. It functions in the pathway porphyrin-containing compound metabolism; heme O biosynthesis; heme O from protoheme: step 1/1. In terms of biological role, converts heme B (protoheme IX) to heme O by substitution of the vinyl group on carbon 2 of heme B porphyrin ring with a hydroxyethyl farnesyl side group. In Nitrosomonas europaea (strain ATCC 19718 / CIP 103999 / KCTC 2705 / NBRC 14298), this protein is Protoheme IX farnesyltransferase.